Reading from the N-terminus, the 442-residue chain is D-serine dehydratase (442 aa).

K118 bears the N6-(pyridoxal phosphate)lysine mark.

This sequence belongs to the serine/threonine dehydratase family. DsdA subfamily. As to quaternary structure, monomer. Pyridoxal 5'-phosphate serves as cofactor.

The catalysed reaction is D-serine = pyruvate + NH4(+). The sequence is that of D-serine dehydratase from Escherichia coli (strain 55989 / EAEC).